The chain runs to 825 residues: Outer dense fiber protein 2 (825 aa).

Phosphoserine occurs at positions 22, 37, 68, and 69. A disordered region spans residues 27 to 46 (LPKPSAASSQKSHKRGMKGD). Thr-87 is modified (phosphothreonine). Ser-90 is subject to Phosphoserine; by TSSK4. Phosphoserine occurs at positions 101 and 104. The residue at position 105 (Thr-105) is a Phosphothreonine. Phosphoserine is present on residues Ser-110 and Ser-124. Residue Lys-133 forms a Glycyl lysine isopeptide (Lys-Gly) (interchain with G-Cter in SUMO2) linkage. The residue at position 134 (Ser-134) is a Phosphoserine. The stretch at 139 to 212 (QKGERQMAKR…MSKLVEAEMD (74 aa)) forms a coiled coil. Thr-226 bears the Phosphothreonine mark. Coiled coils occupy residues 240–418 (DINT…AEQL) and 456–793 (EIIV…NYVQ). A phosphoserine mark is found at Ser-256 and Ser-627. Residues 532 to 696 (KNYEGMIDNY…EAIHQAQLRL (165 aa)) are interaction with BBOF1.

It belongs to the ODF2 family. Self-associates. Associates with microtubules and forms a fibrillar structure partially linked to the microtubule network. Interacts through its C-terminus with PLK1. Interacts with ODF1. Interacts with MARK4; the interaction is required for localization of ODF2 to centrioles. Interacts with TSSK4. Interacts with AKNA. Interacts with QRICH2. Interacts with CFAP58. Interacts with BBOF1. Interacts with CCDC38. Interacts with CCDC42. In terms of processing, tyrosine phosphorylated. Phosphorylated on Ser-90 by TSSK4. Testis-specific. Expressed in the proximal compartment of the elongated spermatid tail; later expression progresses to the distal spermatid tail compartment located in the lumen of the seminiferous epithelium. In spermatids (stages II-III) expression of the tails peaks and remains strong during the remaining steps of spermiogenesis (at protein level). Expression correlates with the onset of spermatogenesis and is first detected at 30 days. Higher expression is seen in testis of 40-day-old and adults that are older than 50 days. No expression is seen in 10- and 20-day-old testes.

Its subcellular location is the cytoplasm. The protein resides in the cytoskeleton. It localises to the microtubule organizing center. It is found in the centrosome. The protein localises to the cell projection. Its subcellular location is the cilium. The protein resides in the centriole. It localises to the spindle pole. It is found in the flagellum. Seems to be a major component of sperm tail outer dense fibers (ODF). ODFs are filamentous structures located on the outside of the axoneme in the midpiece and principal piece of the mammalian sperm tail and may help to maintain the passive elastic structures and elastic recoil of the sperm tail. May have a modulating influence on sperm motility. Functions as a general scaffold protein that is specifically localized at the distal/subdistal appendages of mother centrioles. Component of the centrosome matrix required for the localization of PLK1 and NIN to the centrosomes. Required for the formation and/or maintenance of normal CETN1 assembly. This chain is Outer dense fiber protein 2 (Odf2), found in Rattus norvegicus (Rat).